We begin with the raw amino-acid sequence, 339 residues long: Putative clathrin assembly protein At1g14686 (339 aa).

Residues 16 to 148 (SLIAADDILT…ILFHDGNRHR (133 aa)) form the ENTH domain. The tract at residues 283–307 (ESSEESAERTEIAEEEEEEEEEIET) is disordered. The segment covering 295 to 305 (AEEEEEEEEEI) has biased composition (acidic residues).

It localises to the membrane. The protein resides in the clathrin-coated pit. The protein localises to the golgi apparatus. Its subcellular location is the cytoplasmic vesicle. It is found in the clathrin-coated vesicle. This chain is Putative clathrin assembly protein At1g14686, found in Arabidopsis thaliana (Mouse-ear cress).